The chain runs to 272 residues: 3-methyl-2-oxobutanoate hydroxymethyltransferase (272 aa).

Mg(2+) contacts are provided by Asp54 and Asp93. 3-methyl-2-oxobutanoate-binding positions include 54–55 (DS), Asp93, and Lys123. Glu125 contacts Mg(2+). Glu190 functions as the Proton acceptor in the catalytic mechanism.

This sequence belongs to the PanB family. In terms of assembly, homodecamer; pentamer of dimers. Mg(2+) is required as a cofactor.

It localises to the cytoplasm. The catalysed reaction is 3-methyl-2-oxobutanoate + (6R)-5,10-methylene-5,6,7,8-tetrahydrofolate + H2O = 2-dehydropantoate + (6S)-5,6,7,8-tetrahydrofolate. Its pathway is cofactor biosynthesis; (R)-pantothenate biosynthesis; (R)-pantoate from 3-methyl-2-oxobutanoate: step 1/2. Its function is as follows. Catalyzes the reversible reaction in which hydroxymethyl group from 5,10-methylenetetrahydrofolate is transferred onto alpha-ketoisovalerate to form ketopantoate. In Tropheryma whipplei (strain Twist) (Whipple's bacillus), this protein is 3-methyl-2-oxobutanoate hydroxymethyltransferase.